Consider the following 261-residue polypeptide: Cytochrome c oxidase subunit 3 (261 aa).

Over Met-1 to Pro-15 the chain is Mitochondrial matrix. The chain crosses the membrane as a helical span at residues Trp-16–Trp-34. At Phe-35–Thr-40 the chain is on the mitochondrial intermembrane side. Residues Ile-41–Thr-66 form a helical membrane-spanning segment. At Phe-67 to Thr-72 the chain is on the mitochondrial matrix side. Residues Pro-73–Ser-105 form a helical membrane-spanning segment. At Leu-106 to Glu-128 the chain is on the mitochondrial intermembrane side. The helical transmembrane segment at Val-129–Met-152 threads the bilayer. The Mitochondrial matrix segment spans residues Glu-153–Asn-155. A helical membrane pass occupies residues Arg-156 to Glu-183. Over Ala-184–Asp-190 the chain is Mitochondrial intermembrane. Residues Gly-191–Leu-223 form a helical membrane-spanning segment. Residues Lys-224 to His-232 lie on the Mitochondrial matrix side of the membrane. Residues Phe-233 to Ile-256 traverse the membrane as a helical segment. The Mitochondrial intermembrane segment spans residues Tyr-257–Ser-261.

Belongs to the cytochrome c oxidase subunit 3 family. In terms of assembly, component of the cytochrome c oxidase (complex IV, CIV), a multisubunit enzyme composed of 14 subunits. The complex is composed of a catalytic core of 3 subunits MT-CO1, MT-CO2 and MT-CO3, encoded in the mitochondrial DNA, and 11 supernumerary subunits COX4I, COX5A, COX5B, COX6A, COX6B, COX6C, COX7A, COX7B, COX7C, COX8 and NDUFA4, which are encoded in the nuclear genome. The complex exists as a monomer or a dimer and forms supercomplexes (SCs) in the inner mitochondrial membrane with NADH-ubiquinone oxidoreductase (complex I, CI) and ubiquinol-cytochrome c oxidoreductase (cytochrome b-c1 complex, complex III, CIII), resulting in different assemblies (supercomplex SCI(1)III(2)IV(1) and megacomplex MCI(2)III(2)IV(2)).

It localises to the mitochondrion inner membrane. It catalyses the reaction 4 Fe(II)-[cytochrome c] + O2 + 8 H(+)(in) = 4 Fe(III)-[cytochrome c] + 2 H2O + 4 H(+)(out). In terms of biological role, component of the cytochrome c oxidase, the last enzyme in the mitochondrial electron transport chain which drives oxidative phosphorylation. The respiratory chain contains 3 multisubunit complexes succinate dehydrogenase (complex II, CII), ubiquinol-cytochrome c oxidoreductase (cytochrome b-c1 complex, complex III, CIII) and cytochrome c oxidase (complex IV, CIV), that cooperate to transfer electrons derived from NADH and succinate to molecular oxygen, creating an electrochemical gradient over the inner membrane that drives transmembrane transport and the ATP synthase. Cytochrome c oxidase is the component of the respiratory chain that catalyzes the reduction of oxygen to water. Electrons originating from reduced cytochrome c in the intermembrane space (IMS) are transferred via the dinuclear copper A center (CU(A)) of subunit 2 and heme A of subunit 1 to the active site in subunit 1, a binuclear center (BNC) formed by heme A3 and copper B (CU(B)). The BNC reduces molecular oxygen to 2 water molecules using 4 electrons from cytochrome c in the IMS and 4 protons from the mitochondrial matrix. This is Cytochrome c oxidase subunit 3 (MT-CO3) from Dugong dugon (Dugong).